Here is a 245-residue protein sequence, read N- to C-terminus: Small ribosomal subunit protein uS2 (245 aa).

It belongs to the universal ribosomal protein uS2 family.

The polypeptide is Small ribosomal subunit protein uS2 (Pseudomonas fluorescens (strain ATCC BAA-477 / NRRL B-23932 / Pf-5)).